The sequence spans 267 residues: Hydrolase FUB4 (267 aa).

Residues Ser-93, Asp-183, and His-243 each act as charge relay system in the active site.

This sequence belongs to the AB hydrolase 3 family.

It participates in mycotoxin biosynthesis. In terms of biological role, hydrolase; part of the gene cluster that mediates the biosynthesis of fusaric acid, a mycotoxin with low to moderate toxicity to animals and humans, but with high phytotoxic properties. L-aspartate is suggested as fusaric acid amino acid precursor that is activated and further processed to O-acetyl-L-homoserine by cluster enzymes aspartate kinase FUB3 and homoserine O-acetyltransferase FUB5, as well as enzymes of the primary metabolism. The polyketide synthase (PKS) FUB1 generates the triketide trans-2-hexenal which is presumptively released by the hydrolase FUB4 and linked to the NRPS-bound amino acid precursor by NAD(P)-dependent dehydrogenase FUB6. FUB1, FUB4, and the non-canonical NRPS Fub8 may form an enzyme complex. Further processing of the NRPS-bound intermediate might be carried out by FUB6 and the sulfhydrylase FUB7, enabling a spontaneous electrocyclization to close the carbon backbone of fusaric acid. Dihydrofusaric acid is likely to be released via reduction by the thioester reductase (TR) domain of FUB8 whereupon the final oxidation to fusaric acid may (also) be performed by the FMN-dependent dehydrogenase FUB9. In Fusarium oxysporum f. sp. lycopersici (strain 4287 / CBS 123668 / FGSC 9935 / NRRL 34936) (Fusarium vascular wilt of tomato), this protein is Hydrolase FUB4.